Reading from the N-terminus, the 450-residue chain is Succinate-semialdehyde dehydrogenase (450 aa).

119-120 (WN) is a binding site for NADP(+). R128 contributes to the substrate binding site. NADP(+) contacts are provided by residues 143 to 146 (KPAK) and 197 to 198 (GS). E219 acts as the Proton acceptor in catalysis. Residue L220 participates in NADP(+) binding. Positions 247 and 253 each coordinate substrate. C253 (nucleophile) is an active-site residue. E350 contributes to the NADP(+) binding site. Residue S410 participates in substrate binding.

Belongs to the aldehyde dehydrogenase family. In terms of assembly, homodimer.

The enzyme catalyses succinate semialdehyde + NAD(+) + H2O = succinate + NADH + 2 H(+). It catalyses the reaction succinate semialdehyde + NADP(+) + H2O = succinate + NADPH + 2 H(+). Its pathway is alkaloid degradation; nicotine degradation. Functionally, catalyzes the NAD(P)(+)-dependent oxidation of succinate semialdehyde to succinate, which may enter the citric acid cycle. Is involved in the catabolism of 4-methylaminobutanoate produced from nicotine. Acts preferentially with NADP(+) as cosubstrate but can also use NAD(+). To a lesser extent, is active also towards butyraldehyde (8.5% of the activity observed with succinate semialdehyde) and propionaldehyde (1.6% of the activity observed with succinate semialdehyde) as substrates. The protein is Succinate-semialdehyde dehydrogenase (sad) of Paenarthrobacter nicotinovorans (Arthrobacter nicotinovorans).